Reading from the N-terminus, the 156-residue chain is Transcription elongation factor GreA (156 aa).

A coiled-coil region spans residues 46–67 (AEYHAAREKQSFIEGRIKELEA).

It belongs to the GreA/GreB family.

In terms of biological role, necessary for efficient RNA polymerase transcription elongation past template-encoded arresting sites. The arresting sites in DNA have the property of trapping a certain fraction of elongating RNA polymerases that pass through, resulting in locked ternary complexes. Cleavage of the nascent transcript by cleavage factors such as GreA or GreB allows the resumption of elongation from the new 3'terminus. GreA releases sequences of 2 to 3 nucleotides. The sequence is that of Transcription elongation factor GreA from Cereibacter sphaeroides (strain ATCC 17029 / ATH 2.4.9) (Rhodobacter sphaeroides).